Consider the following 1007-residue polypeptide: A disintegrin and metalloproteinase with thrombospondin motifs 1 (1007 aa).

The N-terminal stretch at 1–20 (MPCCLWAALSLLLAVVGAGA) is a signal peptide. N-linked (GlcNAc...) asparagine glycosylation is found at Asn130 and Asn228. The Peptidase M12B domain occupies 184–370 (LWLELAIVAD…WSSCSKEQFH (187 aa)). A Zn(2+)-binding site is contributed by His322. The short motif at 322–333 (HELAHLLGLTHD) is the Metal-binding element. Glu323 is a catalytic residue. Zn(2+) is bound by residues His326 and His332. Cystine bridges form between Cys338–Cys364, Cys494–Cys530, Cys498–Cys536, and Cys509–Cys520. One can recognise a TSP type-1 1 domain in the interval 482–537 (TPEWGDWEEWSACNADCGYGLRTRTRKCKYRGFVSESACEGAGSQVATCWAGSSCA). 6 N-linked (GlcNAc...) asparagine glycosylation sites follow: Asn561, Asn610, Asn626, Asn737, Asn777, and Asn865. TSP type-1 domains are found at residues 833-899 (CEFV…NRIP) and 900-952 (CPVY…RRCP). 3 disulfides stabilise this stretch: Cys912–Cys946, Cys916–Cys951, and Cys927–Cys935.

Requires Zn(2+) as cofactor.

Its subcellular location is the secreted. It localises to the extracellular space. The protein resides in the extracellular matrix. Involved in larval molting and metamorphosis. May degrade extracellular matrix (ECM) and basement membrane (BM) during the development of organs to allow degeneration and remodeling of tissues. The sequence is that of A disintegrin and metalloproteinase with thrombospondin motifs 1 from Bombyx mori (Silk moth).